Here is a 363-residue protein sequence, read N- to C-terminus: Disease resistance protein RBA1 (363 aa).

The TIR domain maps to 12-175; sequence PVPKVFLSFR…EIVKEVERVL (164 aa). Residues 21–26 and Gly53 contribute to the NAD(+) site; that span reads RGEEIR. Residue Glu86 is part of the active site.

Homooligomer; homooligomerization is required for activity.

The protein resides in the cytoplasm. Its subcellular location is the nucleus. It is found in the nucleoplasm. It carries out the reaction NAD(+) + H2O = ADP-D-ribose + nicotinamide + H(+). It catalyses the reaction NADP(+) + H2O = ADP-D-ribose 2'-phosphate + nicotinamide + H(+). In terms of biological role, disease resistance (R) protein that specifically recognizes the HopBA1 type III effector protein from P.syringae, and triggers cell death. Acts as a NAD(+) hydrolase (NADase): in response to pathogen-recognition, catalyzes cleavage of NAD(+) into ADP-D-ribose (ADPR) and nicotinamide; NAD(+) cleavage triggering a defense system that promotes cell death. In addition to ADPR, also generates a cyclization variant of cyclic ADPR (cADPR), termed v-cADPR, for which the cyclizing bond is unknown. Also able to hydrolyze NADP(+), but not other NAD(+)-related molecules. This is Disease resistance protein RBA1 from Arabidopsis thaliana (Mouse-ear cress).